The chain runs to 472 residues: Alanine--anticapsin ligase (472 aa).

Residue glutamate 109 participates in Mg(2+) binding. Positions 138 and 178 each coordinate ATP. Positions 142–355 constitute an ATP-grasp domain; that stretch reads RAAFNRAGVK…MAQLLLDVLC (214 aa). Leucine 182 lines the Mg(2+) pocket. ATP is bound by residues 184–185, 226–229, and glutamine 268; these read SS and EEFL. Residues glutamate 273 and 309 to 311 contribute to the substrate site; that span reads HTE. The Mg(2+) site is built by glutamate 311 and glutamate 324. 328–331 is a substrate binding site; it reads RFAG.

As to quaternary structure, monomer or homodimer. Requires Mg(2+) as cofactor.

It catalyses the reaction L-anticapsin + L-alanine + ATP = bacilysin + ADP + phosphate + H(+). It participates in antibiotic biosynthesis; bacilysin biosynthesis. In terms of biological role, part of the bacABCDEFG operon responsible for the biosynthesis of bacilysin, an irreversible inactivator of the glutaminase domain of glucosamine synthetase. Catalyzes the formation of alpha-dipeptides from various L-amino acids in the presence of ATP. In vivo catalyzes the ligation of L-alanine and L-anticapsin (epoxycyclohexanonyl-Ala) to produce the final bacilysin antibiotic (L-Ala-L-4S-cyclohexenonyl-Ala dipeptide). In Bacillus subtilis, this protein is Alanine--anticapsin ligase.